The primary structure comprises 393 residues: Enoyl-[acyl-carrier-protein] reductase [NADH] (393 aa).

Residues 48–53 (GSSTGY), 74–75 (FE), 111–112 (DA), and 139–140 (LA) each bind NAD(+). Tyrosine 225 contributes to the substrate binding site. The Proton donor role is filled by tyrosine 235. NAD(+) is bound by residues lysine 244 and 273-275 (LVT).

Belongs to the TER reductase family. Monomer.

It catalyses the reaction a 2,3-saturated acyl-[ACP] + NAD(+) = a (2E)-enoyl-[ACP] + NADH + H(+). Its pathway is lipid metabolism; fatty acid biosynthesis. In terms of biological role, involved in the final reduction of the elongation cycle of fatty acid synthesis (FAS II). Catalyzes the reduction of a carbon-carbon double bond in an enoyl moiety that is covalently linked to an acyl carrier protein (ACP). This chain is Enoyl-[acyl-carrier-protein] reductase [NADH], found in Pseudoalteromonas atlantica (strain T6c / ATCC BAA-1087).